Reading from the N-terminus, the 506-residue chain is Histidine ammonia-lyase (506 aa).

The 5-imidazolinone (Ala-Gly) cross-link spans 143–145 (ASG). Ser144 bears the 2,3-didehydroalanine (Ser) mark.

It belongs to the PAL/histidase family. In terms of processing, contains an active site 4-methylidene-imidazol-5-one (MIO), which is formed autocatalytically by cyclization and dehydration of residues Ala-Ser-Gly.

It localises to the cytoplasm. The catalysed reaction is L-histidine = trans-urocanate + NH4(+). Its pathway is amino-acid degradation; L-histidine degradation into L-glutamate; N-formimidoyl-L-glutamate from L-histidine: step 1/3. The chain is Histidine ammonia-lyase from Salmonella dublin (strain CT_02021853).